The primary structure comprises 211 residues: Large ribosomal subunit protein uL3 (211 aa).

This sequence belongs to the universal ribosomal protein uL3 family. In terms of assembly, part of the 50S ribosomal subunit. Forms a cluster with proteins L14 and L19.

In terms of biological role, one of the primary rRNA binding proteins, it binds directly near the 3'-end of the 23S rRNA, where it nucleates assembly of the 50S subunit. The sequence is that of Large ribosomal subunit protein uL3 from Akkermansia muciniphila (strain ATCC BAA-835 / DSM 22959 / JCM 33894 / BCRC 81048 / CCUG 64013 / CIP 107961 / Muc).